Here is a 531-residue protein sequence, read N- to C-terminus: Glucose-6-phosphate exchanger SLC37A1 (531 aa).

The helical transmembrane segment at 18-38 threads the bilayer; that stretch reads QWYRAFIFMLTFLLYASFHLS. Residues 53-72 are disordered; it reads CTAGDGPESPFSDPSSSTRH. 11 helical membrane passes run 100-120, 129-149, 157-177, 192-214, 222-242, 332-352, 364-384, 392-412, 419-439, 464-484, and 488-508; these read GALD…SGII, YLTF…LGYF, FYVV…PSVV, IMGI…AGYW, SFIV…LFLI, LCLL…PLYI, GELS…AGVI, ASTC…FSSV, ATIA…ALIT, AIID…AGLI, and GWSN…LFLV.

Belongs to the major facilitator superfamily. Organophosphate:Pi antiporter (OPA) (TC 2.A.1.4) family.

It is found in the endoplasmic reticulum membrane. It carries out the reaction D-glucose 6-phosphate(in) + phosphate(out) = D-glucose 6-phosphate(out) + phosphate(in). With respect to regulation, inhibited by vanadate but not by chlorogenic acid. Inorganic phosphate and glucose-6-phosphate antiporter. May transport cytoplasmic glucose-6-phosphate into the lumen of the endoplasmic reticulum and translocate inorganic phosphate into the opposite direction. Independent of a lumenal glucose-6-phosphatase. May not play a role in homeostatic regulation of blood glucose levels. The polypeptide is Glucose-6-phosphate exchanger SLC37A1 (Mus musculus (Mouse)).